Reading from the N-terminus, the 128-residue chain is S-adenosylmethionine decarboxylase proenzyme (128 aa).

Catalysis depends on serine 61, which acts as the Schiff-base intermediate with substrate; via pyruvic acid. Serine 61 is subject to Pyruvic acid (Ser); by autocatalysis. Residue histidine 66 is the Proton acceptor; for processing activity of the active site. Cysteine 81 acts as the Proton donor; for catalytic activity in catalysis.

It belongs to the prokaryotic AdoMetDC family. Type 1 subfamily. As to quaternary structure, heterotetramer of two alpha and two beta chains arranged as a dimer of alpha/beta heterodimers. Pyruvate is required as a cofactor. In terms of processing, is synthesized initially as an inactive proenzyme. Formation of the active enzyme involves a self-maturation process in which the active site pyruvoyl group is generated from an internal serine residue via an autocatalytic post-translational modification. Two non-identical subunits are generated from the proenzyme in this reaction, and the pyruvate is formed at the N-terminus of the alpha chain, which is derived from the carboxyl end of the proenzyme. The post-translation cleavage follows an unusual pathway, termed non-hydrolytic serinolysis, in which the side chain hydroxyl group of the serine supplies its oxygen atom to form the C-terminus of the beta chain, while the remainder of the serine residue undergoes an oxidative deamination to produce ammonia and the pyruvoyl group blocking the N-terminus of the alpha chain.

The catalysed reaction is S-adenosyl-L-methionine + H(+) = S-adenosyl 3-(methylsulfanyl)propylamine + CO2. It participates in amine and polyamine biosynthesis; S-adenosylmethioninamine biosynthesis; S-adenosylmethioninamine from S-adenosyl-L-methionine: step 1/1. Its function is as follows. Catalyzes the decarboxylation of S-adenosylmethionine to S-adenosylmethioninamine (dcAdoMet), the propylamine donor required for the synthesis of the polyamines spermine and spermidine from the diamine putrescine. This chain is S-adenosylmethionine decarboxylase proenzyme, found in Synechococcus sp. (strain WH7803).